Reading from the N-terminus, the 359-residue chain is 3-dehydroquinate synthase (359 aa).

Residues 71–76 (DGEAHK), 105–109 (GVIGD), 129–130 (TT), K142, K151, and 169–172 (TLHT) contribute to the NAD(+) site. Zn(2+)-binding residues include E184, H247, and H264.

This sequence belongs to the sugar phosphate cyclases superfamily. Dehydroquinate synthase family. The cofactor is NAD(+). Co(2+) serves as cofactor. It depends on Zn(2+) as a cofactor.

Its subcellular location is the cytoplasm. It carries out the reaction 7-phospho-2-dehydro-3-deoxy-D-arabino-heptonate = 3-dehydroquinate + phosphate. It functions in the pathway metabolic intermediate biosynthesis; chorismate biosynthesis; chorismate from D-erythrose 4-phosphate and phosphoenolpyruvate: step 2/7. Functionally, catalyzes the conversion of 3-deoxy-D-arabino-heptulosonate 7-phosphate (DAHP) to dehydroquinate (DHQ). In Neisseria meningitidis serogroup B (strain ATCC BAA-335 / MC58), this protein is 3-dehydroquinate synthase.